Consider the following 103-residue polypeptide: G0/G1 switch protein 2 (103 aa).

In terms of assembly, directly interacts with BCL2; this interaction prevents the formation of the anti-apoptotic BAX-BCL2 complex.

It localises to the mitochondrion. Functionally, promotes apoptosis by binding to BCL2, hence preventing the formation of protective BCL2-BAX heterodimers. The chain is G0/G1 switch protein 2 (G0s2) from Rattus norvegicus (Rat).